The primary structure comprises 289 residues: Phosphatidylglycerol--prolipoprotein diacylglyceryl transferase (289 aa).

A run of 7 helical transmembrane segments spans residues 23–43 (ALHW…WLAV), 61–81 (LLYM…VLFY), 99–119 (GGMS…WFAH), 125–145 (FFQV…AGRL), 199–219 (SQLY…NLFI), 226–246 (GSVS…TEFF), and 259–279 (LFSM…LMMV). R144 serves as a coordination point for a 1,2-diacyl-sn-glycero-3-phospho-(1'-sn-glycerol).

This sequence belongs to the Lgt family.

It is found in the cell inner membrane. It catalyses the reaction L-cysteinyl-[prolipoprotein] + a 1,2-diacyl-sn-glycero-3-phospho-(1'-sn-glycerol) = an S-1,2-diacyl-sn-glyceryl-L-cysteinyl-[prolipoprotein] + sn-glycerol 1-phosphate + H(+). The protein operates within protein modification; lipoprotein biosynthesis (diacylglyceryl transfer). In terms of biological role, catalyzes the transfer of the diacylglyceryl group from phosphatidylglycerol to the sulfhydryl group of the N-terminal cysteine of a prolipoprotein, the first step in the formation of mature lipoproteins. The sequence is that of Phosphatidylglycerol--prolipoprotein diacylglyceryl transferase from Pectobacterium atrosepticum (strain SCRI 1043 / ATCC BAA-672) (Erwinia carotovora subsp. atroseptica).